The primary structure comprises 371 residues: Aminomethyltransferase (371 aa).

This sequence belongs to the GcvT family. As to quaternary structure, the glycine cleavage system is composed of four proteins: P, T, L and H.

It carries out the reaction N(6)-[(R)-S(8)-aminomethyldihydrolipoyl]-L-lysyl-[protein] + (6S)-5,6,7,8-tetrahydrofolate = N(6)-[(R)-dihydrolipoyl]-L-lysyl-[protein] + (6R)-5,10-methylene-5,6,7,8-tetrahydrofolate + NH4(+). Functionally, the glycine cleavage system catalyzes the degradation of glycine. This Cutibacterium acnes (strain DSM 16379 / KPA171202) (Propionibacterium acnes) protein is Aminomethyltransferase.